The primary structure comprises 74 residues: ATP synthase subunit c (74 aa).

A run of 2 helical transmembrane segments spans residues 8-28 and 52-72; these read FIGI…VSNI and IGAG…MLLI.

The protein belongs to the ATPase C chain family. As to quaternary structure, F-type ATPases have 2 components, F(1) - the catalytic core - and F(0) - the membrane proton channel. F(1) has five subunits: alpha(3), beta(3), gamma(1), delta(1), epsilon(1). F(0) has three main subunits: a(1), b(2) and c(10-14). The alpha and beta chains form an alternating ring which encloses part of the gamma chain. F(1) is attached to F(0) by a central stalk formed by the gamma and epsilon chains, while a peripheral stalk is formed by the delta and b chains.

The protein resides in the cell inner membrane. F(1)F(0) ATP synthase produces ATP from ADP in the presence of a proton or sodium gradient. F-type ATPases consist of two structural domains, F(1) containing the extramembraneous catalytic core and F(0) containing the membrane proton channel, linked together by a central stalk and a peripheral stalk. During catalysis, ATP synthesis in the catalytic domain of F(1) is coupled via a rotary mechanism of the central stalk subunits to proton translocation. In terms of biological role, key component of the F(0) channel; it plays a direct role in translocation across the membrane. A homomeric c-ring of between 10-14 subunits forms the central stalk rotor element with the F(1) delta and epsilon subunits. In Rickettsia akari (strain Hartford), this protein is ATP synthase subunit c.